Consider the following 142-residue polypeptide: Large ribosomal subunit protein uL13 (142 aa).

It belongs to the universal ribosomal protein uL13 family. As to quaternary structure, part of the 50S ribosomal subunit.

In terms of biological role, this protein is one of the early assembly proteins of the 50S ribosomal subunit, although it is not seen to bind rRNA by itself. It is important during the early stages of 50S assembly. This is Large ribosomal subunit protein uL13 from Bordetella avium (strain 197N).